Reading from the N-terminus, the 483-residue chain is Cysteine proteinase 1, mitochondrial (483 aa).

Residues 1-30 constitute a mitochondrion transit peptide; sequence MLPTSVSRSLYLKTFRSHLLRAPQIVLKRM. Active-site residues include C102, H398, and N421. A propeptide (removed in mature form; by autocatalysis) is located at residue K483.

It belongs to the peptidase C1 family. In terms of assembly, homohexamer. Binds to nucleic acids. Binds single-stranded DNA and RNA with higher affinity than double-stranded DNA. Post-translationally, the N-terminus of isoform Cytoplasmic is blocked.

The protein localises to the mitochondrion. The protein resides in the cytoplasm. It catalyses the reaction Inactivates bleomycin B2 (a cytotoxic glycometallopeptide) by hydrolysis of a carboxyamide bond of beta-aminoalanine, but also shows general aminopeptidase activity. The specificity varies somewhat with source, but amino acid arylamides of Met, Leu and Ala are preferred.. With respect to regulation, inhibited by E64, a specific inhibitor of cysteine proteases, N-ethylmaleimide, iodacetamide, and mercury and zinc ions. The normal physiological role of the enzyme is unknown, but it is not essential for the viability of yeast cells. Has aminopeptidase activity, shortening substrate peptides sequentially by 1 amino acid. Has bleomycin hydrolase activity, which can protect the cell from the toxic effects of bleomycin. Has homocysteine-thiolactonase activity, protecting the cell against homocysteine toxicity. Acts as a repressor in the GAL4 regulatory system, but this does not require either the peptidase or nucleic acid-binding activities. The chain is Cysteine proteinase 1, mitochondrial (LAP3) from Saccharomyces cerevisiae (strain AWRI1631) (Baker's yeast).